The following is a 475-amino-acid chain: ATP synthase subunit beta, chloroplastic (475 aa).

156–163 (GGAGVGKT) contributes to the ATP binding site.

It belongs to the ATPase alpha/beta chains family. As to quaternary structure, F-type ATPases have 2 components, CF(1) - the catalytic core - and CF(0) - the membrane proton channel. CF(1) has five subunits: alpha(3), beta(3), gamma(1), delta(1), epsilon(1). CF(0) has four main subunits: a(1), b(1), b'(1) and c(9-12).

It localises to the plastid. Its subcellular location is the chloroplast thylakoid membrane. It carries out the reaction ATP + H2O + 4 H(+)(in) = ADP + phosphate + 5 H(+)(out). Its function is as follows. Produces ATP from ADP in the presence of a proton gradient across the membrane. The catalytic sites are hosted primarily by the beta subunits. The chain is ATP synthase subunit beta, chloroplastic from Trieres chinensis (Marine centric diatom).